Consider the following 262-residue polypeptide: Hemin import ATP-binding protein HmuV (262 aa).

The 242-residue stretch at 3–244 (LQARNLTLAR…DHMRRVYGIE (242 aa)) folds into the ABC transporter domain. 35-42 (GANGAGKS) is an ATP binding site.

Belongs to the ABC transporter superfamily. Heme (hemin) importer (TC 3.A.1.14.5) family. As to quaternary structure, the complex is composed of two ATP-binding proteins (HmuV), two transmembrane proteins (HmuU) and a solute-binding protein (HmuT).

The protein localises to the cell inner membrane. Functionally, part of the ABC transporter complex HmuTUV involved in hemin import. Responsible for energy coupling to the transport system. The polypeptide is Hemin import ATP-binding protein HmuV (Bordetella pertussis (strain Tohama I / ATCC BAA-589 / NCTC 13251)).